The primary structure comprises 147 residues: MSNDHPQGQLPASPARSALKGYLYVLGSILLVTAAQLGMKWGVIQLPTWQMDLAVMLAHPLPLLVILAGVGCYALSLLCWLAALHSTPLNIAYPLLSTSYALVYLLAVNIPLFAEPLEPGKALGVLFILLGAVLVGIKPAAGTKQTG.

Residues 1–23 lie on the Cytoplasmic side of the membrane; sequence MSNDHPQGQLPASPARSALKGYL. The chain crosses the membrane as a helical span at residues 24-44; that stretch reads YVLGSILLVTAAQLGMKWGVI. The Periplasmic portion of the chain corresponds to 45–62; it reads QLPTWQMDLAVMLAHPLP. The chain crosses the membrane as a helical span at residues 63-83; the sequence is LLVILAGVGCYALSLLCWLAA. Residues 84–93 are Cytoplasmic-facing; the sequence is LHSTPLNIAY. Residues 94 to 114 traverse the membrane as a helical segment; that stretch reads PLLSTSYALVYLLAVNIPLFA. Residues 115-121 lie on the Periplasmic side of the membrane; it reads EPLEPGK. A helical membrane pass occupies residues 122–142; sequence ALGVLFILLGAVLVGIKPAAG. The Cytoplasmic portion of the chain corresponds to 143 to 147; the sequence is TKQTG.

The protein belongs to the ArnF family. Heterodimer of ArnE and ArnF.

The protein resides in the cell inner membrane. Its pathway is bacterial outer membrane biogenesis; lipopolysaccharide biosynthesis. Its function is as follows. Translocates 4-amino-4-deoxy-L-arabinose-phosphoundecaprenol (alpha-L-Ara4N-phosphoundecaprenol) from the cytoplasmic to the periplasmic side of the inner membrane. In Aeromonas hydrophila subsp. hydrophila (strain ATCC 7966 / DSM 30187 / BCRC 13018 / CCUG 14551 / JCM 1027 / KCTC 2358 / NCIMB 9240 / NCTC 8049), this protein is Probable 4-amino-4-deoxy-L-arabinose-phosphoundecaprenol flippase subunit ArnF.